The primary structure comprises 291 residues: uncharacterized protein (291 aa).

It belongs to the PhyH family.

This is an uncharacterized protein from Mycobacterium bovis (strain ATCC BAA-935 / AF2122/97).